The following is a 373-amino-acid chain: MTGVPGSSITLDDLPLRDDLRGKSPYGAPQLSVPVRLNTNENPHPPTRALIDDVAQSVREVAGELHRYPDRDAVALRTDLAAYLSAQTGTAVGVENVWAANGSNEILQQLLQAFGGPGRSALGFVPSYSMHPIISDGTQTRWLVANRGDDFGLDAAVAATAIKEHTPDVVFVTSPNNPSGQSVSLDDLRLLLDALCLQDGGVMIVDEAYGEFSSQPSAIGLIESYPGKLVVTRTMSKAFAFAGGRVGYLVAAPAVIDAMLLVRLPYHLSSVTQAAARAALRHADDTLGSVATLIAERERVSQALTGMGFRVIPSDANFILFGEFADAPATWQRYLDEGVLIRDVGIPGYLRTTIGLAEENDALLAASARIGAP.

Residues 1–10 show a composition bias toward polar residues; the sequence is MTGVPGSSIT. Residues 1-45 form a disordered region; it reads MTGVPGSSITLDDLPLRDDLRGKSPYGAPQLSVPVRLNTNENPHP. Lys-237 bears the N6-(pyridoxal phosphate)lysine mark.

This sequence belongs to the class-II pyridoxal-phosphate-dependent aminotransferase family. Histidinol-phosphate aminotransferase subfamily. Homodimer. Requires pyridoxal 5'-phosphate as cofactor.

The enzyme catalyses L-histidinol phosphate + 2-oxoglutarate = 3-(imidazol-4-yl)-2-oxopropyl phosphate + L-glutamate. It functions in the pathway amino-acid biosynthesis; L-histidine biosynthesis; L-histidine from 5-phospho-alpha-D-ribose 1-diphosphate: step 7/9. In Mycolicibacterium vanbaalenii (strain DSM 7251 / JCM 13017 / BCRC 16820 / KCTC 9966 / NRRL B-24157 / PYR-1) (Mycobacterium vanbaalenii), this protein is Histidinol-phosphate aminotransferase.